The following is a 215-amino-acid chain: Probable transaldolase 1 (215 aa).

Residue Lys-83 is the Schiff-base intermediate with substrate of the active site.

This sequence belongs to the transaldolase family. Type 3B subfamily.

Its subcellular location is the cytoplasm. The enzyme catalyses D-sedoheptulose 7-phosphate + D-glyceraldehyde 3-phosphate = D-erythrose 4-phosphate + beta-D-fructose 6-phosphate. It participates in carbohydrate degradation; pentose phosphate pathway; D-glyceraldehyde 3-phosphate and beta-D-fructose 6-phosphate from D-ribose 5-phosphate and D-xylulose 5-phosphate (non-oxidative stage): step 2/3. Its function is as follows. Transaldolase is important for the balance of metabolites in the pentose-phosphate pathway. The sequence is that of Probable transaldolase 1 from Bacillus anthracis.